A 342-amino-acid chain; its full sequence is Phosphate acyltransferase (342 aa).

The protein belongs to the PlsX family. As to quaternary structure, homodimer. Probably interacts with PlsY.

Its subcellular location is the cytoplasm. It carries out the reaction a fatty acyl-[ACP] + phosphate = an acyl phosphate + holo-[ACP]. Its pathway is lipid metabolism; phospholipid metabolism. In terms of biological role, catalyzes the reversible formation of acyl-phosphate (acyl-PO(4)) from acyl-[acyl-carrier-protein] (acyl-ACP). This enzyme utilizes acyl-ACP as fatty acyl donor, but not acyl-CoA. In Pelotomaculum thermopropionicum (strain DSM 13744 / JCM 10971 / SI), this protein is Phosphate acyltransferase.